We begin with the raw amino-acid sequence, 297 residues long: Pyridoxal 5'-phosphate synthase subunit Pdx1 (297 aa).

Residue Asp-27 coordinates D-ribose 5-phosphate. Catalysis depends on Lys-84, which acts as the Schiff-base intermediate with D-ribose 5-phosphate. Gly-156 contacts D-ribose 5-phosphate. Residue Arg-168 participates in D-glyceraldehyde 3-phosphate binding. D-ribose 5-phosphate-binding positions include Gly-217 and 238–239 (GS).

It belongs to the PdxS/SNZ family. Homohexamer and homododecamer. In the presence of Pdx2, forms a dodecamer of heterodimers.

The catalysed reaction is aldehydo-D-ribose 5-phosphate + D-glyceraldehyde 3-phosphate + L-glutamine = pyridoxal 5'-phosphate + L-glutamate + phosphate + 3 H2O + H(+). It functions in the pathway cofactor biosynthesis; pyridoxal 5'-phosphate biosynthesis. Functionally, catalyzes the formation of pyridoxal 5'-phosphate from ribose 5-phosphate (RBP), glyceraldehyde 3-phosphate (G3P) and ammonia. The ammonia is provided by Pdx2. Can also use ribulose 5-phosphate and dihydroxyacetone phosphate as substrates, resulting from enzyme-catalyzed isomerization of RBP and G3P, respectively. This is Pyridoxal 5'-phosphate synthase subunit Pdx1 from Plasmodium berghei.